The sequence spans 1154 residues: Chromosome partition protein Smc (1154 aa).

ATP is bound at residue 32 to 39 (PNGCGKSN). 3 coiled-coil regions span residues 170–215 (VAGL…ARQA), 282–505 (LREA…LNGE), and 627–993 (AARR…EARE).

It belongs to the SMC family. As to quaternary structure, homodimer.

The protein localises to the cytoplasm. Its function is as follows. Required for chromosome condensation and partitioning. The chain is Chromosome partition protein Smc from Rhodopseudomonas palustris (strain ATCC BAA-98 / CGA009).